The sequence spans 487 residues: Neuronal immunoglobulin domain-containing protein rig-3 (487 aa).

Positions 1–23 (MGRLLAKMLFPLAMCLFVSAVSA) are cleaved as a signal peptide. Ig-like domains lie at 34–139 (PIVI…KTIK) and 247–354 (PEFE…PKVT). Cystine bridges form between Cys61/Cys124 and Cys271/Cys327. Asp466 carries the GPI-anchor amidated aspartate lipid modification. The propeptide at 467–487 (SASDSKFPLALATLFFVCLFI) is removed in mature form.

Expressed in the cholinergic motor neurons AS, VA and DA in the ventral nerve cord and in the mechanosensory ALM neurons in the midbody.

The protein resides in the cell projection. Its subcellular location is the axon. The protein localises to the synapse. It is found in the cell membrane. Functionally, cell surface protein which plays a role in the plasticity of cholinergic synapses at neuromuscular junctions and in the polarity of the mechanosensory neuron ALM, possibly by antagonizing Wnt signaling. This is Neuronal immunoglobulin domain-containing protein rig-3 from Caenorhabditis elegans.